A 214-amino-acid polypeptide reads, in one-letter code: MGRGKLEIRKIENKTNRQVTFSKRRNGIMKKAQELTVLCDAKVSLLMISSTHKLHHYLSPGVSLKKMYDEYQKIEGVDLWRKQWERMQEQHRKVLELNSLLRREISRRMGGDLEGLTLVELSALQQEMEEAIIQIRNKKYHTIKNQTGTTRKKIKNLEERHTDLVMELEAKFRGPQFAIGEDDPRNYEAAAAAAVYGNDVAAANLFALSRHPIT.

The 56-residue stretch at 3–58 (RGKLEIRKIENKTNRQVTFSKRRNGIMKKAQELTVLCDAKVSLLMISSTHKLHHYL) folds into the MADS-box domain. Residues 84 to 174 (WERMQEQHRK…VMELEAKFRG (91 aa)) enclose the K-box domain.

As to expression, in flowers. Not found in vegetative tissues.

It localises to the nucleus. The sequence is that of MADS-box protein CMB2 (CMB2) from Dianthus caryophyllus (Carnation).